A 95-amino-acid chain; its full sequence is Large ribosomal subunit protein bL27 (95 aa).

A propeptide spanning residues Met-1–Phe-10 is cleaved from the precursor.

This sequence belongs to the bacterial ribosomal protein bL27 family. Post-translationally, the N-terminus is cleaved by ribosomal processing cysteine protease Prp.

In Mesoplasma florum (strain ATCC 33453 / NBRC 100688 / NCTC 11704 / L1) (Acholeplasma florum), this protein is Large ribosomal subunit protein bL27.